The sequence spans 128 residues: UPF0102 protein GSU0650 (128 aa).

This sequence belongs to the UPF0102 family.

In Geobacter sulfurreducens (strain ATCC 51573 / DSM 12127 / PCA), this protein is UPF0102 protein GSU0650.